A 304-amino-acid chain; its full sequence is MTTLRIATRKSPLALWQSEHVADALRQHHPGLEVVLVPMSTRGDEVLDRSLAAIGGKGLFLKELELAMLRGEADCAVHSLKDVPMELDEPFVLPAILERGDPADALVSNLYASLQALPLGARVGTSSLRRQAQLRAARPDLELIDLRGNVNTRLAKLDNGGYDAIVLACAGLQRLGLEARISARLDAPEWLPAPAQGAVAVECRGDDARIHSLLAVLDAGRTRVCVEAERAMNRALHGSCHVPVAAFARWEGQDLFLQGMVGSASDGRLIHADAHGSADDTEALGRRVAQGLFDKGAAQLLAEL.

Cysteine 240 carries the post-translational modification S-(dipyrrolylmethanemethyl)cysteine.

It belongs to the HMBS family. As to quaternary structure, monomer. The cofactor is dipyrromethane.

The catalysed reaction is 4 porphobilinogen + H2O = hydroxymethylbilane + 4 NH4(+). It participates in porphyrin-containing compound metabolism; protoporphyrin-IX biosynthesis; coproporphyrinogen-III from 5-aminolevulinate: step 2/4. Tetrapolymerization of the monopyrrole PBG into the hydroxymethylbilane pre-uroporphyrinogen in several discrete steps. The chain is Porphobilinogen deaminase from Xanthomonas axonopodis pv. citri (strain 306).